An 89-amino-acid polypeptide reads, in one-letter code: Small ribosomal subunit protein uS15 (89 aa).

Belongs to the universal ribosomal protein uS15 family. Part of the 30S ribosomal subunit. Forms a bridge to the 50S subunit in the 70S ribosome, contacting the 23S rRNA.

Its function is as follows. One of the primary rRNA binding proteins, it binds directly to 16S rRNA where it helps nucleate assembly of the platform of the 30S subunit by binding and bridging several RNA helices of the 16S rRNA. Functionally, forms an intersubunit bridge (bridge B4) with the 23S rRNA of the 50S subunit in the ribosome. In Shouchella clausii (strain KSM-K16) (Alkalihalobacillus clausii), this protein is Small ribosomal subunit protein uS15.